The chain runs to 217 residues: UPF0502 protein Sfri_1696 (217 aa).

It belongs to the UPF0502 family.

This Shewanella frigidimarina (strain NCIMB 400) protein is UPF0502 protein Sfri_1696.